Here is a 286-residue protein sequence, read N- to C-terminus: Phosphatidylserine decarboxylase proenzyme (286 aa).

Active-site charge relay system; for autoendoproteolytic cleavage activity residues include Asp90, His147, and Ser252. The active-site Schiff-base intermediate with substrate; via pyruvic acid; for decarboxylase activity is Ser252. Ser252 carries the pyruvic acid (Ser); by autocatalysis modification.

The protein belongs to the phosphatidylserine decarboxylase family. PSD-B subfamily. Prokaryotic type I sub-subfamily. As to quaternary structure, heterodimer of a large membrane-associated beta subunit and a small pyruvoyl-containing alpha subunit. Pyruvate serves as cofactor. Post-translationally, is synthesized initially as an inactive proenzyme. Formation of the active enzyme involves a self-maturation process in which the active site pyruvoyl group is generated from an internal serine residue via an autocatalytic post-translational modification. Two non-identical subunits are generated from the proenzyme in this reaction, and the pyruvate is formed at the N-terminus of the alpha chain, which is derived from the carboxyl end of the proenzyme. The autoendoproteolytic cleavage occurs by a canonical serine protease mechanism, in which the side chain hydroxyl group of the serine supplies its oxygen atom to form the C-terminus of the beta chain, while the remainder of the serine residue undergoes an oxidative deamination to produce ammonia and the pyruvoyl prosthetic group on the alpha chain. During this reaction, the Ser that is part of the protease active site of the proenzyme becomes the pyruvoyl prosthetic group, which constitutes an essential element of the active site of the mature decarboxylase.

The protein localises to the cell membrane. The enzyme catalyses a 1,2-diacyl-sn-glycero-3-phospho-L-serine + H(+) = a 1,2-diacyl-sn-glycero-3-phosphoethanolamine + CO2. It participates in phospholipid metabolism; phosphatidylethanolamine biosynthesis; phosphatidylethanolamine from CDP-diacylglycerol: step 2/2. In terms of biological role, catalyzes the formation of phosphatidylethanolamine (PtdEtn) from phosphatidylserine (PtdSer). This chain is Phosphatidylserine decarboxylase proenzyme, found in Ectopseudomonas mendocina (strain ymp) (Pseudomonas mendocina).